Reading from the N-terminus, the 396-residue chain is Aspartate aminotransferase (396 aa).

Residues G34, W130, and N183 each coordinate L-aspartate. K246 carries the N6-(pyridoxal phosphate)lysine modification. R374 contributes to the L-aspartate binding site.

The protein belongs to the class-I pyridoxal-phosphate-dependent aminotransferase family. Homodimer. It depends on pyridoxal 5'-phosphate as a cofactor.

It is found in the cytoplasm. The enzyme catalyses L-aspartate + 2-oxoglutarate = oxaloacetate + L-glutamate. The polypeptide is Aspartate aminotransferase (aspC) (Haemophilus influenzae (strain ATCC 51907 / DSM 11121 / KW20 / Rd)).